The following is a 293-amino-acid chain: Coatomer subunit epsilon-2 (293 aa).

This sequence belongs to the COPE family. Oligomeric complex that consists of at least the alpha, beta, beta', gamma, delta, epsilon and zeta subunits.

The protein resides in the cytoplasm. It is found in the golgi apparatus membrane. It localises to the cytoplasmic vesicle. Its subcellular location is the COPI-coated vesicle membrane. Its function is as follows. The coatomer is a cytosolic protein complex that binds to dilysine motifs and reversibly associates with Golgi non-clathrin-coated vesicles, which further mediate biosynthetic protein transport from the ER, via the Golgi up to the trans Golgi network. The coatomer complex is required for budding from Golgi membranes, and is essential for the retrograde Golgi-to-ER transport of dilysine-tagged proteins. The protein is Coatomer subunit epsilon-2 of Arabidopsis thaliana (Mouse-ear cress).